A 101-amino-acid polypeptide reads, in one-letter code: YcgL domain-containing protein ACIAD2309 (101 aa).

One can recognise a YcgL domain in the interval 1–93; the sequence is MHCDIYRSSK…PPEGFINPSD (93 aa).

The polypeptide is YcgL domain-containing protein ACIAD2309 (Acinetobacter baylyi (strain ATCC 33305 / BD413 / ADP1)).